A 37-amino-acid polypeptide reads, in one-letter code: Large ribosomal subunit protein bL36 (37 aa).

It belongs to the bacterial ribosomal protein bL36 family.

This is Large ribosomal subunit protein bL36 from Nitratidesulfovibrio vulgaris (strain DSM 19637 / Miyazaki F) (Desulfovibrio vulgaris).